A 521-amino-acid chain; its full sequence is Vang-like protein 2-A (521 aa).

Positions 1-81 (MDNDSQYSGY…TTVVTGTSEH (81 aa)) are disordered. At 1–108 (MDNDSQYSGY…AKLDCSRHLG (108 aa)) the chain is on the cytoplasmic side. The span at 15–33 (GHSRSSRKHRDRRERHRSK) shows a compositional bias: basic residues. The span at 57 to 67 (ESTRGEDRDDN) shows a compositional bias: basic and acidic residues. Residues 69–81 (GETTTVVTGTSEH) show a composition bias toward low complexity. Residues 109 to 129 (VVIGGALALLSFLTPIAFMLL) form a helical membrane-spanning segment. Topologically, residues 130-147 (PQILWREDLEQCGTACEG) are extracellular. A helical membrane pass occupies residues 148–168 (LFISVAFKLLILLLGSWALFF). Over 169-178 (RRPKAFFPRV) the chain is Cytoplasmic. The chain crosses the membrane as a helical span at residues 179 to 199 (FVFRALLMVLVFLLVVSYWLF). Residues 200-218 (YGVRILESRDKNYQGIVQY) lie on the Extracellular side of the membrane. Residues 219 to 239 (AVSLVDALLFVHYLAVVLLEL) form a helical membrane-spanning segment. The Cytoplasmic segment spans residues 240–521 (RQLQPQFTIK…VMRLQSETSV (282 aa)). Positions 518 to 521 (ETSV) match the PDZ-binding motif.

The protein belongs to the Vang family. As to quaternary structure, interacts with dvl/dsh. Interacts with prickle3. In terms of tissue distribution, during gastrulation, broadly expressed throughout the marginal zone and animal cap region. From the neurula stages, expression becomes concentrated in neural tissues, in the neural plate and neural tube.

The protein resides in the cell membrane. Its function is as follows. Has a role in non-canonical Wnt/planar cell polarity (PCP) signaling; can recruit dvl/dsh and prickle from the cytoplasm to the plasma membrane. Acts in a PCP complex to regulate the polarized assembly of fibronectrin on the surface of the mesoderm during gastrulation. Regulates convergent extension cell movements in both dorsal mesoderm and neural tissue during gastrulation, without affecting cell fate. Regulates neural fold closure during neurulation. May be required for cell surface localization of fzd3 and fzd6 in the inner ear. The chain is Vang-like protein 2-A (vangl2-a) from Xenopus laevis (African clawed frog).